Reading from the N-terminus, the 503-residue chain is Lysine--tRNA ligase (503 aa).

Mg(2+)-binding residues include Glu-412 and Glu-419.

Belongs to the class-II aminoacyl-tRNA synthetase family. In terms of assembly, homodimer. Requires Mg(2+) as cofactor.

The protein resides in the cytoplasm. It catalyses the reaction tRNA(Lys) + L-lysine + ATP = L-lysyl-tRNA(Lys) + AMP + diphosphate. The sequence is that of Lysine--tRNA ligase from Idiomarina loihiensis (strain ATCC BAA-735 / DSM 15497 / L2-TR).